The primary structure comprises 108 residues: Iron-sulfur cluster assembly protein CyaY (108 aa).

Belongs to the frataxin family.

In terms of biological role, involved in iron-sulfur (Fe-S) cluster assembly. May act as a regulator of Fe-S biogenesis. This Burkholderia cenocepacia (strain ATCC BAA-245 / DSM 16553 / LMG 16656 / NCTC 13227 / J2315 / CF5610) (Burkholderia cepacia (strain J2315)) protein is Iron-sulfur cluster assembly protein CyaY.